Here is a 199-residue protein sequence, read N- to C-terminus: Probable nicotinate-nucleotide adenylyltransferase (199 aa).

It belongs to the NadD family.

The enzyme catalyses nicotinate beta-D-ribonucleotide + ATP + H(+) = deamido-NAD(+) + diphosphate. It functions in the pathway cofactor biosynthesis; NAD(+) biosynthesis; deamido-NAD(+) from nicotinate D-ribonucleotide: step 1/1. Catalyzes the reversible adenylation of nicotinate mononucleotide (NaMN) to nicotinic acid adenine dinucleotide (NaAD). This Roseiflexus sp. (strain RS-1) protein is Probable nicotinate-nucleotide adenylyltransferase.